Here is a 213-residue protein sequence, read N- to C-terminus: Holliday junction resolvase RecU (213 aa).

Mg(2+)-binding residues include Thr-98, Asp-100, Glu-113, and Gln-132.

This sequence belongs to the RecU family. The cofactor is Mg(2+).

The protein resides in the cytoplasm. It catalyses the reaction Endonucleolytic cleavage at a junction such as a reciprocal single-stranded crossover between two homologous DNA duplexes (Holliday junction).. Its function is as follows. Endonuclease that resolves Holliday junction intermediates in genetic recombination. Cleaves mobile four-strand junctions by introducing symmetrical nicks in paired strands. Promotes annealing of linear ssDNA with homologous dsDNA. Required for DNA repair, homologous recombination and chromosome segregation. The polypeptide is Holliday junction resolvase RecU (Ligilactobacillus salivarius (strain UCC118) (Lactobacillus salivarius)).